The following is a 147-amino-acid chain: 3-dehydroquinate dehydratase (147 aa).

Residue Y23 is the Proton acceptor of the active site. N74, H80, and D87 together coordinate substrate. Residue H100 is the Proton donor of the active site. Residues I101–S102 and R111 contribute to the substrate site.

Belongs to the type-II 3-dehydroquinase family. In terms of assembly, homododecamer.

The enzyme catalyses 3-dehydroquinate = 3-dehydroshikimate + H2O. Its pathway is metabolic intermediate biosynthesis; chorismate biosynthesis; chorismate from D-erythrose 4-phosphate and phosphoenolpyruvate: step 3/7. Its function is as follows. Catalyzes a trans-dehydration via an enolate intermediate. This Prochlorococcus marinus (strain MIT 9215) protein is 3-dehydroquinate dehydratase.